An 802-amino-acid polypeptide reads, in one-letter code: Post-transcriptional regulator mkt1 (802 aa).

A phosphoserine mark is found at Ser-227, Ser-228, and Ser-230.

Belongs to the XPG/RAD2 endonuclease family. As to quaternary structure, interacts with pab1 binding protein ath1.

Involved in post-transcriptional regulation of gene expression by 3'-UTR-mediated RNA regulation. Promotes interactions between mRNA and poly(A)-binding protein. Binds the 3' UTR of mRNAs, centromeric transcripts and antisense-rDNA. Required for the establishment but not the maintenance of heterochromatin at pericentromeres, and for the maintenance of small domains of facultative heterochromatin known as HOODs. This Schizosaccharomyces pombe (strain 972 / ATCC 24843) (Fission yeast) protein is Post-transcriptional regulator mkt1.